A 232-amino-acid chain; its full sequence is MEQGAEDIPVVYLHDIKRQYTQGEATLTILNGAKLALWAGQSVALVAPSGSGKSTLLHIAGLLEHPDEGEVYVSGAATTALTDAERTQIRRTDIGFVYQSHRLLPEFTALENVMMPQMIRGLKRSETVSRAKEILAYLGLADRITHRPSELSGGEQQRVAIARAVANAPRVLFADEPTGNLDPHTADHVFKALTQLVKATQVAMLIATHNMELAGRMDRRVSIEDGVIVELE.

In terms of domain architecture, ABC transporter spans 11-231; sequence VYLHDIKRQY…SIEDGVIVEL (221 aa). Residue 47-54 participates in ATP binding; sequence APSGSGKS.

Belongs to the ABC transporter superfamily. Lipoprotein translocase (TC 3.A.1.125) family. As to quaternary structure, the complex is composed of two ATP-binding proteins (LolD) and two transmembrane proteins (LolC and LolE).

It localises to the cell inner membrane. In terms of biological role, part of the ABC transporter complex LolCDE involved in the translocation of mature outer membrane-directed lipoproteins, from the inner membrane to the periplasmic chaperone, LolA. Responsible for the formation of the LolA-lipoprotein complex in an ATP-dependent manner. This Rhodopseudomonas palustris (strain BisB5) protein is Lipoprotein-releasing system ATP-binding protein LolD.